Reading from the N-terminus, the 270-residue chain is 4-hydroxy-tetrahydrodipicolinate reductase (270 aa).

NAD(+) contacts are provided by residues 11-16 (GAGGRM) and Glu37. Arg38 contacts NADP(+). NAD(+) is bound by residues 101-103 (GTT) and 125-128 (APNM). Catalysis depends on His158, which acts as the Proton donor/acceptor. His159 is a (S)-2,3,4,5-tetrahydrodipicolinate binding site. The active-site Proton donor is the Lys162. 168 to 169 (GT) is a (S)-2,3,4,5-tetrahydrodipicolinate binding site.

It belongs to the DapB family.

The protein localises to the cytoplasm. It catalyses the reaction (S)-2,3,4,5-tetrahydrodipicolinate + NAD(+) + H2O = (2S,4S)-4-hydroxy-2,3,4,5-tetrahydrodipicolinate + NADH + H(+). The catalysed reaction is (S)-2,3,4,5-tetrahydrodipicolinate + NADP(+) + H2O = (2S,4S)-4-hydroxy-2,3,4,5-tetrahydrodipicolinate + NADPH + H(+). It participates in amino-acid biosynthesis; L-lysine biosynthesis via DAP pathway; (S)-tetrahydrodipicolinate from L-aspartate: step 4/4. In terms of biological role, catalyzes the conversion of 4-hydroxy-tetrahydrodipicolinate (HTPA) to tetrahydrodipicolinate. The polypeptide is 4-hydroxy-tetrahydrodipicolinate reductase (Shewanella sp. (strain W3-18-1)).